A 416-amino-acid polypeptide reads, in one-letter code: UDP-N-acetylglucosamine 1-carboxyvinyltransferase (416 aa).

Residue 22 to 23 (KN) participates in phosphoenolpyruvate binding. Arg-92 is a UDP-N-acetyl-alpha-D-glucosamine binding site. Cys-116 acts as the Proton donor in catalysis. A 2-(S-cysteinyl)pyruvic acid O-phosphothioketal modification is found at Cys-116. UDP-N-acetyl-alpha-D-glucosamine is bound by residues 121-125 (RPVDQ), Asp-304, and Ile-326.

It belongs to the EPSP synthase family. MurA subfamily.

Its subcellular location is the cytoplasm. The enzyme catalyses phosphoenolpyruvate + UDP-N-acetyl-alpha-D-glucosamine = UDP-N-acetyl-3-O-(1-carboxyvinyl)-alpha-D-glucosamine + phosphate. It participates in cell wall biogenesis; peptidoglycan biosynthesis. Its function is as follows. Cell wall formation. Adds enolpyruvyl to UDP-N-acetylglucosamine. The polypeptide is UDP-N-acetylglucosamine 1-carboxyvinyltransferase (Cupriavidus necator (strain ATCC 17699 / DSM 428 / KCTC 22496 / NCIMB 10442 / H16 / Stanier 337) (Ralstonia eutropha)).